Consider the following 126-residue polypeptide: Aspartate 1-decarboxylase (126 aa).

Residue Ser-25 is the Schiff-base intermediate with substrate; via pyruvic acid of the active site. Ser-25 carries the post-translational modification Pyruvic acid (Ser). A substrate-binding site is contributed by Thr-57. Tyr-58 (proton donor) is an active-site residue. 73-75 provides a ligand contact to substrate; the sequence is GAA.

It belongs to the PanD family. Heterooctamer of four alpha and four beta subunits. It depends on pyruvate as a cofactor. Is synthesized initially as an inactive proenzyme, which is activated by self-cleavage at a specific serine bond to produce a beta-subunit with a hydroxyl group at its C-terminus and an alpha-subunit with a pyruvoyl group at its N-terminus.

It is found in the cytoplasm. It catalyses the reaction L-aspartate + H(+) = beta-alanine + CO2. It participates in cofactor biosynthesis; (R)-pantothenate biosynthesis; beta-alanine from L-aspartate: step 1/1. Its function is as follows. Catalyzes the pyruvoyl-dependent decarboxylation of aspartate to produce beta-alanine. The chain is Aspartate 1-decarboxylase from Thioalkalivibrio sulfidiphilus (strain HL-EbGR7).